A 665-amino-acid polypeptide reads, in one-letter code: F-box/LRR-repeat protein 3 (665 aa).

In terms of domain architecture, F-box spans 11-60; that stretch reads KPFDLLSEELVFIILDLISPNPSDLKSFSLTCKSFYQLESKHRGSLKPLR. LRR repeat units lie at residues 61–81, 82–108, 109–134, 135–159, 160–185, 186–211, 214–235, 236–261, 262–287, 288–312, 313–338, 339–364, 365–390, 391–416, 419–440, 441–466, 467–492, 493–517, 518–543, 544–569, and 594–619; these read SDYL…DLTF, CPRV…DLSR, SGSF…DLSN, ATEM…KLGR, CKML…SLKW, CVGV…DLSY, ITGK…LLEG, CFGV…DASS, CQNL…DLSH, CSSV…IRLD, GCSV…SLSK, CVSV…DITC, CRKL…KMES, CSLV…DLTD, IDDE…KLGI, CLNI…DLYR, SVGI…NISY, CQDI…ESRG, CPNI…DLKK, CPSI…NVSD, and SSGL…KLHA.

The chain is F-box/LRR-repeat protein 3 (FBL3) from Arabidopsis thaliana (Mouse-ear cress).